A 431-amino-acid polypeptide reads, in one-letter code: Enolase (431 aa).

Gln-167 provides a ligand contact to (2R)-2-phosphoglycerate. The Proton donor role is filled by Glu-209. Positions 246, 289, and 316 each coordinate Mg(2+). The (2R)-2-phosphoglycerate site is built by Lys-341, Arg-370, Ser-371, and Lys-392. Lys-341 acts as the Proton acceptor in catalysis.

The protein belongs to the enolase family. Component of the RNA degradosome, a multiprotein complex involved in RNA processing and mRNA degradation. Mg(2+) is required as a cofactor.

Its subcellular location is the cytoplasm. It is found in the secreted. It localises to the cell surface. The catalysed reaction is (2R)-2-phosphoglycerate = phosphoenolpyruvate + H2O. It participates in carbohydrate degradation; glycolysis; pyruvate from D-glyceraldehyde 3-phosphate: step 4/5. Its function is as follows. Catalyzes the reversible conversion of 2-phosphoglycerate (2-PG) into phosphoenolpyruvate (PEP). It is essential for the degradation of carbohydrates via glycolysis. This chain is Enolase, found in Marinobacter nauticus (strain ATCC 700491 / DSM 11845 / VT8) (Marinobacter aquaeolei).